We begin with the raw amino-acid sequence, 542 residues long: CTP synthase (542 aa).

The interval 1–265 (MARYVFITGG…DSEVLSAFGI (265 aa)) is amidoligase domain. Ser-13 lines the CTP pocket. Ser-13 lines the UTP pocket. Residue 14–19 (SLGKGI) participates in ATP binding. Tyr-54 provides a ligand contact to L-glutamine. Asp-71 contributes to the ATP binding site. Mg(2+)-binding residues include Asp-71 and Glu-139. Residues 146–148 (DIE), 186–191 (KTKPTQ), and Lys-222 each bind CTP. UTP is bound by residues 186-191 (KTKPTQ) and Lys-222. Residues 291 to 541 (TIAVVGKYTG…IEAAIEQSRL (251 aa)) enclose the Glutamine amidotransferase type-1 domain. Gly-353 contacts L-glutamine. Catalysis depends on Cys-380, which acts as the Nucleophile; for glutamine hydrolysis. L-glutamine-binding positions include 381–384 (FGMQ), Glu-404, and Arg-469. Active-site residues include His-514 and Glu-516.

The protein belongs to the CTP synthase family. Homotetramer.

The enzyme catalyses UTP + L-glutamine + ATP + H2O = CTP + L-glutamate + ADP + phosphate + 2 H(+). It carries out the reaction L-glutamine + H2O = L-glutamate + NH4(+). It catalyses the reaction UTP + NH4(+) + ATP = CTP + ADP + phosphate + 2 H(+). Its pathway is pyrimidine metabolism; CTP biosynthesis via de novo pathway; CTP from UDP: step 2/2. With respect to regulation, allosterically activated by GTP, when glutamine is the substrate; GTP has no effect on the reaction when ammonia is the substrate. The allosteric effector GTP functions by stabilizing the protein conformation that binds the tetrahedral intermediate(s) formed during glutamine hydrolysis. Inhibited by the product CTP, via allosteric rather than competitive inhibition. Catalyzes the ATP-dependent amination of UTP to CTP with either L-glutamine or ammonia as the source of nitrogen. Regulates intracellular CTP levels through interactions with the four ribonucleotide triphosphates. The polypeptide is CTP synthase (Brucella melitensis biotype 2 (strain ATCC 23457)).